We begin with the raw amino-acid sequence, 456 residues long: Exodeoxyribonuclease 7 large subunit (456 aa).

The protein belongs to the XseA family. Heterooligomer composed of large and small subunits.

It localises to the cytoplasm. The enzyme catalyses Exonucleolytic cleavage in either 5'- to 3'- or 3'- to 5'-direction to yield nucleoside 5'-phosphates.. Bidirectionally degrades single-stranded DNA into large acid-insoluble oligonucleotides, which are then degraded further into small acid-soluble oligonucleotides. The sequence is that of Exodeoxyribonuclease 7 large subunit from Erwinia tasmaniensis (strain DSM 17950 / CFBP 7177 / CIP 109463 / NCPPB 4357 / Et1/99).